The primary structure comprises 43 residues: Protein PsbN (43 aa).

The helical transmembrane segment at 5–27 threads the bilayer; sequence TLIAISISGLLVSFTGYALYTAF.

The protein belongs to the PsbN family.

The protein resides in the plastid. It localises to the chloroplast thylakoid membrane. Functionally, may play a role in photosystem I and II biogenesis. This is Protein PsbN from Phaseolus vulgaris (Kidney bean).